The sequence spans 37 residues: Large ribosomal subunit protein bL36 (37 aa).

Belongs to the bacterial ribosomal protein bL36 family.

This is Large ribosomal subunit protein bL36 from Polaromonas naphthalenivorans (strain CJ2).